The chain runs to 460 residues: 7-cyano-7-deazaguanine synthase 2 (460 aa).

The For GATase activity role is filled by cysteine 2. The 224-residue stretch at cysteine 2–asparagine 225 folds into the Glutamine amidotransferase type-2 domain. An ATP-binding site is contributed by alanine 245–alanine 255. The Zn(2+) site is built by cysteine 426, cysteine 434, cysteine 437, and cysteine 440.

Belongs to the QueC family. Zn(2+) is required as a cofactor.

It catalyses the reaction 7-carboxy-7-deazaguanine + NH4(+) + ATP = 7-cyano-7-deazaguanine + ADP + phosphate + H2O + H(+). It participates in purine metabolism; 7-cyano-7-deazaguanine biosynthesis. In terms of biological role, catalyzes the ATP-dependent conversion of 7-carboxy-7-deazaguanine (CDG) to 7-cyano-7-deazaguanine (preQ(0)). The sequence is that of 7-cyano-7-deazaguanine synthase 2 (queC2) from Sulfurisphaera tokodaii (strain DSM 16993 / JCM 10545 / NBRC 100140 / 7) (Sulfolobus tokodaii).